The primary structure comprises 276 residues: Undecaprenyl-diphosphatase 1 (276 aa).

A run of 7 helical transmembrane segments spans residues 4-24 (ILIC…FLPV), 45-62 (KTFD…VCWE), 83-103 (FTLN…LFEK), 108-128 (VLFS…IILW), 187-207 (VATE…TLYE), 217-237 (VDSL…AFVC), and 252-272 (VFAW…YSGW).

The protein belongs to the UppP family.

The protein localises to the cell inner membrane. The enzyme catalyses di-trans,octa-cis-undecaprenyl diphosphate + H2O = di-trans,octa-cis-undecaprenyl phosphate + phosphate + H(+). Its function is as follows. Catalyzes the dephosphorylation of undecaprenyl diphosphate (UPP). Confers resistance to bacitracin. The protein is Undecaprenyl-diphosphatase 1 of Burkholderia ambifaria (strain ATCC BAA-244 / DSM 16087 / CCUG 44356 / LMG 19182 / AMMD) (Burkholderia cepacia (strain AMMD)).